The sequence spans 616 residues: Chaperone protein HscA (616 aa).

It belongs to the heat shock protein 70 family.

Its function is as follows. Chaperone involved in the maturation of iron-sulfur cluster-containing proteins. Has a low intrinsic ATPase activity which is markedly stimulated by HscB. Involved in the maturation of IscU. This Salmonella arizonae (strain ATCC BAA-731 / CDC346-86 / RSK2980) protein is Chaperone protein HscA.